We begin with the raw amino-acid sequence, 276 residues long: 3-methyl-2-oxobutanoate hydroxymethyltransferase (276 aa).

Positions 44 and 83 each coordinate Mg(2+). 3-methyl-2-oxobutanoate contacts are provided by residues 44-45 (DS), Asp-83, and Lys-113. Glu-115 is a Mg(2+) binding site. Glu-182 functions as the Proton acceptor in the catalytic mechanism.

The protein belongs to the PanB family. In terms of assembly, homodecamer; pentamer of dimers. Mg(2+) is required as a cofactor.

Its subcellular location is the cytoplasm. The catalysed reaction is 3-methyl-2-oxobutanoate + (6R)-5,10-methylene-5,6,7,8-tetrahydrofolate + H2O = 2-dehydropantoate + (6S)-5,6,7,8-tetrahydrofolate. The protein operates within cofactor biosynthesis; (R)-pantothenate biosynthesis; (R)-pantoate from 3-methyl-2-oxobutanoate: step 1/2. Catalyzes the reversible reaction in which hydroxymethyl group from 5,10-methylenetetrahydrofolate is transferred onto alpha-ketoisovalerate to form ketopantoate. In Clostridium acetobutylicum (strain ATCC 824 / DSM 792 / JCM 1419 / IAM 19013 / LMG 5710 / NBRC 13948 / NRRL B-527 / VKM B-1787 / 2291 / W), this protein is 3-methyl-2-oxobutanoate hydroxymethyltransferase.